Consider the following 150-residue polypeptide: Large ribosomal subunit protein bL9 (150 aa).

This sequence belongs to the bacterial ribosomal protein bL9 family.

Binds to the 23S rRNA. The polypeptide is Large ribosomal subunit protein bL9 (Burkholderia pseudomallei (strain 668)).